The sequence spans 65 residues: Large ribosomal subunit protein uL29 (65 aa).

The protein belongs to the universal ribosomal protein uL29 family.

The chain is Large ribosomal subunit protein uL29 from Acinetobacter baumannii (strain AB307-0294).